The chain runs to 231 residues: 7-cyano-7-deazaguanine synthase (231 aa).

Residue 11–21 (LSAGLDSTVNA) coordinates ATP. Positions 197, 205, 208, and 211 each coordinate Zn(2+).

Belongs to the QueC family. Zn(2+) is required as a cofactor.

The enzyme catalyses 7-carboxy-7-deazaguanine + NH4(+) + ATP = 7-cyano-7-deazaguanine + ADP + phosphate + H2O + H(+). The protein operates within purine metabolism; 7-cyano-7-deazaguanine biosynthesis. Catalyzes the ATP-dependent conversion of 7-carboxy-7-deazaguanine (CDG) to 7-cyano-7-deazaguanine (preQ(0)). The protein is 7-cyano-7-deazaguanine synthase of Bdellovibrio bacteriovorus (strain ATCC 15356 / DSM 50701 / NCIMB 9529 / HD100).